The chain runs to 481 residues: Molybdate-anion transporter (481 aa).

Helical transmembrane passes span Met1–Ile21, Leu47–Tyr67, Ile80–Trp100, Phe131–Phe151, Trp180–Gly200, Leu201–Val221, Val276–Leu296, Pro306–Phe326, Leu341–Val361, Leu371–Leu391, Ala403–Leu423, and Phe443–Val463.

This sequence belongs to the major facilitator superfamily.

The protein resides in the cell membrane. Mediates high-affinity intracellular uptake of the rare oligo-element molybdenum. The chain is Molybdate-anion transporter (mfsd5) from Danio rerio (Zebrafish).